Here is a 233-residue protein sequence, read N- to C-terminus: Large ribosomal subunit protein uL3 (233 aa).

Residues 145–172 form a disordered region; the sequence is FGSQRASHGNSRSHRVPGSIGQAQDPGR. N5-methylglutamine is present on Gln-168.

This sequence belongs to the universal ribosomal protein uL3 family. As to quaternary structure, part of the 50S ribosomal subunit. Forms a cluster with proteins L14 and L19. Methylated by PrmB.

Functionally, one of the primary rRNA binding proteins, it binds directly near the 3'-end of the 23S rRNA, where it nucleates assembly of the 50S subunit. This is Large ribosomal subunit protein uL3 from Bordetella petrii (strain ATCC BAA-461 / DSM 12804 / CCUG 43448).